A 126-amino-acid chain; its full sequence is Aspartate 1-decarboxylase (126 aa).

Serine 25 (schiff-base intermediate with substrate; via pyruvic acid) is an active-site residue. At serine 25 the chain carries Pyruvic acid (Ser). Position 57 (threonine 57) interacts with substrate. Tyrosine 58 (proton donor) is an active-site residue. Glycine 73 to alanine 75 contributes to the substrate binding site.

It belongs to the PanD family. Heterooctamer of four alpha and four beta subunits. The cofactor is pyruvate. Post-translationally, is synthesized initially as an inactive proenzyme, which is activated by self-cleavage at a specific serine bond to produce a beta-subunit with a hydroxyl group at its C-terminus and an alpha-subunit with a pyruvoyl group at its N-terminus.

It localises to the cytoplasm. It catalyses the reaction L-aspartate + H(+) = beta-alanine + CO2. It participates in cofactor biosynthesis; (R)-pantothenate biosynthesis; beta-alanine from L-aspartate: step 1/1. In terms of biological role, catalyzes the pyruvoyl-dependent decarboxylation of aspartate to produce beta-alanine. The protein is Aspartate 1-decarboxylase of Alcanivorax borkumensis (strain ATCC 700651 / DSM 11573 / NCIMB 13689 / SK2).